Consider the following 120-residue polypeptide: Ribonuclease P protein component 2 (120 aa).

This sequence belongs to the eukaryotic/archaeal RNase P protein component 2 family. Consists of a catalytic RNA component and at least 4-5 protein subunits.

It is found in the cytoplasm. The catalysed reaction is Endonucleolytic cleavage of RNA, removing 5'-extranucleotides from tRNA precursor.. Part of ribonuclease P, a protein complex that generates mature tRNA molecules by cleaving their 5'-ends. The polypeptide is Ribonuclease P protein component 2 (Methanobrevibacter smithii (strain ATCC 35061 / DSM 861 / OCM 144 / PS)).